A 654-amino-acid polypeptide reads, in one-letter code: Protein THALLO (654 aa).

Over residues 1 to 16 the composition is skewed to basic residues; the sequence is MGKKGGTLKRSSKSTK. Disordered stretches follow at residues 1–23, 35–145, and 164–212; these read MGKK…DIVE, KQRD…SDDE, and SITA…KDTH. The Nuclear localization signal 1 motif lies at 2-9; sequence GKKGGTLK. Composition is skewed to acidic residues over residues 44 to 56, 64 to 82, and 103 to 114; these read VNDD…EDDV, GVDD…EEAE, and GDDEMADDDKDK. Residues 140 to 160 are a coiled coil; the sequence is LSSDDEDIKAEEEEVIRLRAE. Over residues 171-181 the composition is skewed to acidic residues; that stretch reads GLDDDSEEDSD. Residues 182–212 show a composition bias toward basic and acidic residues; the sequence is RELTMEEISDKGKQATKSITDKKEKGDKDTH. The stretch at 243–263 forms a coiled coil; sequence LSELNDAVEELESKINPVMNK. 3 disordered regions span residues 362–397, 470–492, and 509–654; these read SDSV…HQND, VSTK…DDIG, and KSSE…SIRM. Residues 364–387 are compositionally biased toward basic and acidic residues; sequence SVDRITQDTAKPMKIDNAREEKKK. A compositionally biased stretch (acidic residues) spans 524-546; it reads SDDEDDNDGDNNDMVDNDGESED. Residues 552–561 show a composition bias toward basic residues; sequence VKQKQQAKRA. The segment covering 588–599 has biased composition (polar residues); it reads SNQMVSNRGLTR. The Nuclear localization signal 2 signature appears at 608 to 615; that stretch reads PRKKYRKN. Positions 645–654 are enriched in polar residues; that stretch reads NPNTSRSIRM.

Belongs to the SAS10 family. As to quaternary structure, interacts with NUCL1, NUCL2, JMJ14, NOF1 and MPP10 in the nucleus. As to expression, mainly present in tissues undergoing rapid cellular growth and differentiation. Mostly expressed in shoots and flowers, and, to a lower extent, in leaves, siliques, roots and seedlings.

The protein localises to the nucleus. Its subcellular location is the nucleolus. Functionally, essential protein during embryogenesis. Involved both in gene transcription regulation and in processing events critical for proper rRNA biogenesis and nucleolar organization during reproduction; contributes to pre-rRNA processing at the 5' external transcribed spacer. Binds RNA. The polypeptide is Protein THALLO (Arabidopsis thaliana (Mouse-ear cress)).